The sequence spans 211 residues: Adenylate kinase (211 aa).

10–15 (GSGKGT) contributes to the ATP binding site. Residues 30 to 59 (STGDMLRAEVSKKSPLGLKAEEYMKQGLLV) form an NMP region. Residues threonine 31, arginine 36, 57–59 (LLV), 84–87 (GFPR), and glutamine 91 contribute to the AMP site. The interval 125–162 (GRRVCPKCGATYNIYYQKPKNDTLCDNDATPLIQRDDD) is LID. Residue arginine 126 participates in ATP binding. The Zn(2+) site is built by cysteine 129 and cysteine 132. 135–136 (TY) contacts ATP. Zn(2+) is bound by residues cysteine 149 and aspartate 152. Positions 159 and 170 each coordinate AMP. Glycine 198 is an ATP binding site.

This sequence belongs to the adenylate kinase family. As to quaternary structure, monomer.

It localises to the cytoplasm. The enzyme catalyses AMP + ATP = 2 ADP. It participates in purine metabolism; AMP biosynthesis via salvage pathway; AMP from ADP: step 1/1. In terms of biological role, catalyzes the reversible transfer of the terminal phosphate group between ATP and AMP. Plays an important role in cellular energy homeostasis and in adenine nucleotide metabolism. The sequence is that of Adenylate kinase from Hydrogenobaculum sp. (strain Y04AAS1).